We begin with the raw amino-acid sequence, 64 residues long: Large ribosomal subunit protein bL35 (64 aa).

The protein belongs to the bacterial ribosomal protein bL35 family.

In Aliivibrio fischeri (strain ATCC 700601 / ES114) (Vibrio fischeri), this protein is Large ribosomal subunit protein bL35.